A 335-amino-acid polypeptide reads, in one-letter code: Fructose-1,6-bisphosphatase class 1 (335 aa).

Mg(2+)-binding residues include Glu90, Asp113, Leu115, and Asp116. Substrate-binding positions include 116–119 (DGSS), Asn209, Tyr242, and Lys272. Glu278 provides a ligand contact to Mg(2+).

Belongs to the FBPase class 1 family. Homotetramer. The cofactor is Mg(2+).

Its subcellular location is the cytoplasm. It carries out the reaction beta-D-fructose 1,6-bisphosphate + H2O = beta-D-fructose 6-phosphate + phosphate. The protein operates within carbohydrate biosynthesis; gluconeogenesis. The chain is Fructose-1,6-bisphosphatase class 1 from Mannheimia succiniciproducens (strain KCTC 0769BP / MBEL55E).